The primary structure comprises 293 residues: Ribokinase (293 aa).

Residues 11 to 13 (SMD), 39 to 43 (GKGAN), and glutamate 139 contribute to the substrate site. ATP contacts are provided by residues asparagine 183 and 210-215 (TEGKQG). The K(+) site is built by aspartate 236 and threonine 238. Residues 241 to 242 (GD) and asparagine 266 contribute to the ATP site. Aspartate 242 provides a ligand contact to substrate. Catalysis depends on aspartate 242, which acts as the Proton acceptor. K(+) contacts are provided by serine 272, serine 275, and glycine 277.

It belongs to the carbohydrate kinase PfkB family. Ribokinase subfamily. In terms of assembly, homodimer. It depends on Mg(2+) as a cofactor.

It is found in the cytoplasm. The catalysed reaction is D-ribose + ATP = D-ribose 5-phosphate + ADP + H(+). Its pathway is carbohydrate metabolism; D-ribose degradation; D-ribose 5-phosphate from beta-D-ribopyranose: step 2/2. Its activity is regulated as follows. Activated by a monovalent cation that binds near, but not in, the active site. The most likely occupant of the site in vivo is potassium. Ion binding induces a conformational change that may alter substrate affinity. Its function is as follows. Catalyzes the phosphorylation of ribose at O-5 in a reaction requiring ATP and magnesium. The resulting D-ribose-5-phosphate can then be used either for sythesis of nucleotides, histidine, and tryptophan, or as a component of the pentose phosphate pathway. This chain is Ribokinase, found in Bacillus subtilis (strain 168).